Here is an 810-residue protein sequence, read N- to C-terminus: Janus kinase and microtubule-interacting protein 2 (810 aa).

Coiled coils occupy residues 13-102, 148-178, and 207-244; these read EALI…EMSR, ERLKLLQEIADLKTAKKQVDEALSNMIQADK, and RRLMDEIKAKDRIIFSLEKELETQTGYVQKLQLQKEAL. Positions 261–274 are enriched in basic and acidic residues; it reads PKREIPGRAGDGSE. Disordered regions lie at residues 261–280 and 437–465; these read PKREIPGRAGDGSEHCSSPD and YDEDSMDSETSSMASFRTDRTPATPDDDL. Positions 280 to 419 form a coiled coil; the sequence is DLRRNQKRIA…REKLIRRRKH (140 aa). Coiled coils occupy residues 468-597 and 664-808; these read SLAA…RERR and EKWI…SNRK.

It belongs to the JAKMIP family. Highly expressed in brain, moderately expressed in thymus, spleen and lung, and weakly expressed in kidney, liver and peripheral blood lymphocytes. Also expressed in adrenal and pituitary glands, as well as testis.

It localises to the golgi apparatus. This Homo sapiens (Human) protein is Janus kinase and microtubule-interacting protein 2 (JAKMIP2).